We begin with the raw amino-acid sequence, 234 residues long: Leucyl/phenylalanyl-tRNA--protein transferase (234 aa).

This sequence belongs to the L/F-transferase family.

The protein resides in the cytoplasm. It catalyses the reaction N-terminal L-lysyl-[protein] + L-leucyl-tRNA(Leu) = N-terminal L-leucyl-L-lysyl-[protein] + tRNA(Leu) + H(+). It carries out the reaction N-terminal L-arginyl-[protein] + L-leucyl-tRNA(Leu) = N-terminal L-leucyl-L-arginyl-[protein] + tRNA(Leu) + H(+). The catalysed reaction is L-phenylalanyl-tRNA(Phe) + an N-terminal L-alpha-aminoacyl-[protein] = an N-terminal L-phenylalanyl-L-alpha-aminoacyl-[protein] + tRNA(Phe). Functionally, functions in the N-end rule pathway of protein degradation where it conjugates Leu, Phe and, less efficiently, Met from aminoacyl-tRNAs to the N-termini of proteins containing an N-terminal arginine or lysine. The chain is Leucyl/phenylalanyl-tRNA--protein transferase from Escherichia coli O7:K1 (strain IAI39 / ExPEC).